A 180-amino-acid polypeptide reads, in one-letter code: Regulator of G-protein signaling 8 (180 aa).

Position 26 is a phosphoserine (serine 26). Residues serine 56 to leucine 171 form the RGS domain.

As to quaternary structure, interacts with GNAO1. Interacts with GNAI3.

Its subcellular location is the cell membrane. It is found in the membrane. It localises to the perikaryon. The protein resides in the cell projection. The protein localises to the dendrite. Its subcellular location is the nucleus. In terms of biological role, regulates G protein-coupled receptor signaling cascades, including signaling via muscarinic acetylcholine receptor CHRM2 and dopamine receptor DRD2. Inhibits signal transduction by increasing the GTPase activity of G protein alpha subunits, thereby driving them into their inactive GDP-bound form. Modulates the activity of potassium channels that are activated in response to DRD2 and CHRM2 signaling. The protein is Regulator of G-protein signaling 8 (RGS8) of Homo sapiens (Human).